The primary structure comprises 268 residues: Oxygen-evolving enhancer protein 2-1, chloroplastic (268 aa).

The N-terminal 82 residues, 1 to 82 (MASTQCFLHQ…IGSKVSPADA (82 aa)), are a transit peptide targeting the chloroplast.

Belongs to the PsbP family.

The protein resides in the plastid. It is found in the chloroplast thylakoid membrane. Its function is as follows. May be involved in the regulation of photosystem II. The polypeptide is Oxygen-evolving enhancer protein 2-1, chloroplastic (PSBP1) (Nicotiana tabacum (Common tobacco)).